Consider the following 371-residue polypeptide: UDP-N-acetylglucosamine--N-acetylmuramyl-(pentapeptide) pyrophosphoryl-undecaprenol N-acetylglucosamine transferase (371 aa).

Residues 15-17, asparagine 126, arginine 169, serine 197, and glutamine 298 contribute to the UDP-N-acetyl-alpha-D-glucosamine site; that span reads TGG.

It belongs to the glycosyltransferase 28 family. MurG subfamily.

The protein localises to the cell inner membrane. It carries out the reaction di-trans,octa-cis-undecaprenyl diphospho-N-acetyl-alpha-D-muramoyl-L-alanyl-D-glutamyl-meso-2,6-diaminopimeloyl-D-alanyl-D-alanine + UDP-N-acetyl-alpha-D-glucosamine = di-trans,octa-cis-undecaprenyl diphospho-[N-acetyl-alpha-D-glucosaminyl-(1-&gt;4)]-N-acetyl-alpha-D-muramoyl-L-alanyl-D-glutamyl-meso-2,6-diaminopimeloyl-D-alanyl-D-alanine + UDP + H(+). It participates in cell wall biogenesis; peptidoglycan biosynthesis. Functionally, cell wall formation. Catalyzes the transfer of a GlcNAc subunit on undecaprenyl-pyrophosphoryl-MurNAc-pentapeptide (lipid intermediate I) to form undecaprenyl-pyrophosphoryl-MurNAc-(pentapeptide)GlcNAc (lipid intermediate II). This is UDP-N-acetylglucosamine--N-acetylmuramyl-(pentapeptide) pyrophosphoryl-undecaprenol N-acetylglucosamine transferase from Paramagnetospirillum magneticum (strain ATCC 700264 / AMB-1) (Magnetospirillum magneticum).